We begin with the raw amino-acid sequence, 543 residues long: MADDNGGGGDDYVSEAVRPEGDTHTREEGLSKSRDRDREKDKDKERHRDRDRDRGRDRDRGRDRDLDKDRDRDKDRDRHQRHHRDKREHRDRPDDHDRHRSRDSERRRDRERDGHRRHRSRSRSRSRGRDDHRSRSHSKSKRVSGFDLGPTAQSVLPQFPTIPTPSQLPGSSIPGMFPNMLPFADGQINPLVMQPQAMTQQATRHARRVYVGGLPPSANEQSVAIYFNQVMAAIGGNTAGPGDAVLNVYINHDKKFAFVEMRSVEEASNAMALDGILFEGAPVKVRRPTDYNPSLAAALGPSQPSSNLNLAAVGLTPGSAGGLEGPDRIFVGGLPYYFTEAQVRELLESFGPLRGFDLVKDRETGNSKGYAFCVYQDLNVTDIACAALNGIKMGDKTLTVRRANQGSAQPRPEQENILLQAQQQVQLQKLVYQVGALPTKVVCLTQVVTADELKDDEEYEDIMEDMRLEAGKYGNLVKVVIPRPHPSGEPVSGVGKVFLEYADVDGSTKAKTAMHGRKFGGNPVVAVFYPENKFADEDYDAAA.

Residues methionine 1–aspartate 10 show a composition bias toward gly residues. The disordered stretch occupies residues methionine 1–serine 171. Basic and acidic residues-rich tracts occupy residues valine 17–arginine 78 and glutamate 88–glycine 114. Residues histidine 115–serine 126 are compositionally biased toward basic residues. RRM domains are found at residues arginine 207–aspartate 290, aspartate 327–glutamine 405, and glutamine 446–asparagine 532.

This sequence belongs to the splicing factor SR family.

Its subcellular location is the nucleus. Its function is as follows. Necessary for the splicing of pre-mRNA. The chain is Splicing factor U2af large subunit B (U2AF65B) from Triticum aestivum (Wheat).